Consider the following 293-residue polypeptide: Acetyl-coenzyme A carboxylase carboxyl transferase subunit beta (293 aa).

The CoA carboxyltransferase N-terminal domain maps to 29 to 293 (LWSKCPECGQ…GCKPMELTSA (265 aa)). Positions 33, 36, 52, and 55 each coordinate Zn(2+). The C4-type zinc finger occupies 33 to 55 (CPECGQVVYLKDLKLNASVCANC).

This sequence belongs to the AccD/PCCB family. In terms of assembly, acetyl-CoA carboxylase is a heterohexamer composed of biotin carboxyl carrier protein (AccB), biotin carboxylase (AccC) and two subunits each of ACCase subunit alpha (AccA) and ACCase subunit beta (AccD). The cofactor is Zn(2+).

Its subcellular location is the cytoplasm. The enzyme catalyses N(6)-carboxybiotinyl-L-lysyl-[protein] + acetyl-CoA = N(6)-biotinyl-L-lysyl-[protein] + malonyl-CoA. The protein operates within lipid metabolism; malonyl-CoA biosynthesis; malonyl-CoA from acetyl-CoA: step 1/1. Its function is as follows. Component of the acetyl coenzyme A carboxylase (ACC) complex. Biotin carboxylase (BC) catalyzes the carboxylation of biotin on its carrier protein (BCCP) and then the CO(2) group is transferred by the transcarboxylase to acetyl-CoA to form malonyl-CoA. This Synechococcus sp. (strain CC9605) protein is Acetyl-coenzyme A carboxylase carboxyl transferase subunit beta.